A 333-amino-acid chain; its full sequence is Transaldolase (333 aa).

Lysine 136 functions as the Schiff-base intermediate with substrate in the catalytic mechanism.

This sequence belongs to the transaldolase family. Type 1 subfamily. Homodimer.

Its subcellular location is the cytoplasm. The catalysed reaction is D-sedoheptulose 7-phosphate + D-glyceraldehyde 3-phosphate = D-erythrose 4-phosphate + beta-D-fructose 6-phosphate. It functions in the pathway carbohydrate degradation; pentose phosphate pathway; D-glyceraldehyde 3-phosphate and beta-D-fructose 6-phosphate from D-ribose 5-phosphate and D-xylulose 5-phosphate (non-oxidative stage): step 2/3. In terms of biological role, transaldolase is important for the balance of metabolites in the pentose-phosphate pathway. This is Transaldolase from Acidobacterium capsulatum (strain ATCC 51196 / DSM 11244 / BCRC 80197 / JCM 7670 / NBRC 15755 / NCIMB 13165 / 161).